Here is a 168-residue protein sequence, read N- to C-terminus: Ribosome maturation factor RimM (168 aa).

One can recognise a PRC barrel domain in the interval 96–168 (VDEYYWGDLI…TIRVDWQKDW (73 aa)).

It belongs to the RimM family. In terms of assembly, binds ribosomal protein uS19.

It is found in the cytoplasm. An accessory protein needed during the final step in the assembly of 30S ribosomal subunit, possibly for assembly of the head region. Essential for efficient processing of 16S rRNA. May be needed both before and after RbfA during the maturation of 16S rRNA. It has affinity for free ribosomal 30S subunits but not for 70S ribosomes. The sequence is that of Ribosome maturation factor RimM from Aromatoleum aromaticum (strain DSM 19018 / LMG 30748 / EbN1) (Azoarcus sp. (strain EbN1)).